Consider the following 1211-residue polypeptide: A disintegrin and metalloproteinase with thrombospondin motifs 2 (1211 aa).

Residues 1–29 form the signal peptide; it reads MDPPAGAARRLLCPALLLLLLLLPPPLLP. Positions 30–253 are excised as a propeptide; sequence PPPPPANARL…GVLEEHANSS (224 aa). N-linked (GlcNAc...) asparagine glycans are attached at residues Asn-112 and Asn-251. The Peptidase M12B domain maps to 266–470; the sequence is YNIEVLLGVD…HSYDCLLDDP (205 aa). 10 disulfide bridges follow: Cys-343–Cys-392, Cys-386–Cys-465, Cys-425–Cys-451, Cys-492–Cys-517, Cys-503–Cys-526, Cys-512–Cys-545, Cys-539–Cys-550, Cys-573–Cys-610, Cys-577–Cys-615, and Cys-588–Cys-600. Position 408 (His-408) interacts with Zn(2+). The active site involves Glu-409. Positions 412 and 418 each coordinate Zn(2+). Residues 480-560 enclose the Disintegrin domain; that stretch reads QLPGLHYSMN…IWLTPDILKR (81 aa). One can recognise a TSP type-1 1 domain in the interval 561 to 616; sequence DGSWGAWSPFGSCSRTCGTGVKFRTRQCDNPHPANGGRTCSGLAYDFQLCSRQDCP. The Cell attachment site motif lies at 691-693; the sequence is RGD. The tract at residues 723–851 is spacer; sequence KVVKGTFTRS…NVDDNNVLEE (129 aa). TSP type-1 domains follow at residues 854–912, 914–971, and 975–1029; these read VVYE…NPQE, SQPV…RACS, and CPGR…GPCP. N-linked (GlcNAc...) asparagine glycans are attached at residues Asn-949 and Asn-993. 3 cysteine pairs are disulfide-bonded: Cys-987–Cys-1023, Cys-991–Cys-1028, and Cys-1002–Cys-1012. Asn-1031 carries an N-linked (GlcNAc...) asparagine glycan. Positions 1059–1097 constitute a PLAC domain; that stretch reads SKGHCQGDKSIFCRMEVLSRYCSIPGYNKLCCKSCNLYN. Asn-1098, Asn-1145, and Asn-1150 each carry an N-linked (GlcNAc...) asparagine glycan. Residues 1170–1191 are disordered; sequence LEDEVQPPNLIPRRPSPYEKTR.

In terms of assembly, may belong to a multimeric complex. Binds specifically to collagen type XIV. Requires Zn(2+) as cofactor. Post-translationally, the precursor is cleaved by a furin endopeptidase. Glycosylated. Can be O-fucosylated by POFUT2 on a serine or a threonine residue found within the consensus sequence C1-X(2)-(S/T)-C2-G of the TSP type-1 repeat domains where C1 and C2 are the first and second cysteine residue of the repeat, respectively. Fucosylated repeats can then be further glycosylated by the addition of a beta-1,3-glucose residue by the glucosyltransferase, B3GALTL. Fucosylation mediates the efficient secretion of ADAMTS family members. Can also be C-glycosylated with one or two mannose molecules on tryptophan residues within the consensus sequence W-X-X-W of the TPRs, and N-glycosylated. These other glycosylations can also facilitate secretion. As to expression, expressed at high level in skin, bone, tendon and aorta and at low levels in thymus and brain.

It is found in the secreted. The protein resides in the extracellular space. It localises to the extracellular matrix. The catalysed reaction is Cleaves the N-propeptide of collagen chain alpha1(I) at Pro-|-Gln and of alpha1(II) and alpha2(I) at Ala-|-Gln.. Cleaves the propeptides of type I and II collagen prior to fibril assembly. Does not act on type III collagen. Cleaves lysyl oxidase LOX at a site downstream of its propeptide cleavage site to produce a short LOX form with reduced collagen-binding activity. This is A disintegrin and metalloproteinase with thrombospondin motifs 2 (ADAMTS2) from Homo sapiens (Human).